The following is a 747-amino-acid chain: Mitochondrial inner membrane i-AAA protease supercomplex subunit YME1 (747 aa).

Residues 51-64 (KNSGEMPPKKEADS) show a composition bias toward basic and acidic residues. Residues 51 to 92 (KNSGEMPPKKEADSSGKASNKSTISSIDNSQPPPPSNTNDKT) form a disordered region. Residues 66-80 (GKASNKSTISSIDNS) show a composition bias toward polar residues. ATP is bound at residue 321 to 328 (GPPGTGKT). His540 provides a ligand contact to Zn(2+). Glu541 is a catalytic residue. Residues His544 and Asp618 each contribute to the Zn(2+) site. The disordered stretch occupies residues 718–747 (STNTVVEGPDSDERKDIGDDKPKIPTMLNA). The span at 728–740 (SDERKDIGDDKPK) shows a compositional bias: basic and acidic residues.

This sequence in the N-terminal section; belongs to the AAA ATPase family. It in the C-terminal section; belongs to the peptidase M41 family. As to quaternary structure, component of the mitochondrial inner membrane i-AAA protease supercomplex composed of MGR1, MGR3 and YME1. Interacts directly with MGR1. The cofactor is Zn(2+).

The protein localises to the mitochondrion inner membrane. Catalytic subunit of the mitochondrial inner membrane i-AAA protease supercomplex required for mitochondrial inner membrane protein turnover. The protease is probably ATP-dependent. Important to maintain the integrity of the mitochondrial compartment. Required both for the degradation of unassembled subunit 2 of cytochrome c oxidase (COX2) and for efficient assembly of mitochondrial respiratory chain. Binds unfolded substrates in an ATPase-independent manner; binding of folded COX2, a physiological substrate, requires an active ATPase but when COX2 is destabilized an active ATPase is no longer necessary. May process ATG32. The chain is Mitochondrial inner membrane i-AAA protease supercomplex subunit YME1 (YME1) from Saccharomyces cerevisiae (strain ATCC 204508 / S288c) (Baker's yeast).